Consider the following 1801-residue polypeptide: MASSLAAQLSQIAANSTNQLNLKAQRLAHSKSLIFDKRVAGSQDFDTIYDICYDGFRELCQLDFRFAQFERSIFSEQSKVQDRTEMNVEQNRELDSVLEAFLALVGGRLLLSPAVKAVEWLIRRFRVHEYNTRFTILTFLPYYSTPVFLNLLAILPDDLPSALKVLIPYKRSAINPVRQALVQNAISNRDLITTLNNYVLQVCRQRAHHHALLAFWAGIITEGVAGMLDSSRSGRRNVEKQKHDDIILQILPVLNDGFAMKDVSELVIGCYMVCVVLAQKAELQDRVLDGLMEAVTGSWTEETMSSGLICVAVLAQQKPDPILPKRVFKAMLRMKDPLKQLADISTEYKTSQLLLGLVAGCVDSLSTQKDSARLELLSSMFKSQLLNDADTAKAMTFVLQAASAVGGTISLDTQTQIAEIVQHFSRSSSLQPVFQKVIDESSIDLSVIEYNLQTVIESVPVNKAIEDVEMEDADKTETATDGYDSALESLAKESSFSTSFLTAQSIPVFDKLVQTFALSAGSPERVSAFVELPVLCKANATTSPQFLSFFVRVFTGMYPAGVKAAALKTISSIVSSAAWSDVDVQALLPFMLIALADPSERVRSGAVDALANIGKVVDKKKKSGVWARDSLYGKSMHIPWLSSSDFQKILERAVLPELEECRSDGEHIGRALENALRGAASDSASAIKKPLRLAFFTYLCSHAVHLPLFAPRAGLLNLLNRVDKAGGTTRTKELEPLLKKWRDMSEQEVAEVHEKEQISVSDFEAQVLKTVTPKEKDSINLLLSTVTPYSPSLRASFVSSVFNRISEIWGKVPEDRQITAAEKLFELSTQASESPLVDNARDLLRRVELPGPVLLNYLQQIPASITDIDSLGPAPKRRRTSQNNMVAMTTKDEAKLSKLMDKMTFILELVDGSSPEAHPELTEWLFQTLAALHHFKSQIQSGMSYLLSLTLGSLLAIVNRSRASSKPQFDTSVVRADLVVDCVRTTESPQVQNTALLLVAGLSVIAPELVLHSVMPIFTFMGSSVLRKDDDYSVSVIDQTIDQVVPALIQSLRHQKRDVVSGTSELLLSFTAAFEHIPSHRRLRLFHALITKLGTEEFLFAVLAMLANRYSMDKAVLVLMTGLVSDADATVELSTYSKFLNLVGDSLKSKPGISQVLLGIGSDDGREPHKVAADLLRALAYLFKHSSLKVKIARALTTETDDSERIRALFSNILEQVLAIGESMQSVKPVHQAAGDVLSGLFSTLTTIDFLDTIEALLKRPDDALRRKVLSLLATRLQQSPERDGASQTRMLDFLTVLVDIVQSSPDILLKHAAVTCIDRITEKYGKKEPSMVTSAAQVVASASCIGQEDDRIRINGVLCLASMVEVLGQAMIPALPEVLNRSLALLELSLETNKVNARLHDAVFTLFSALFVHLPYMVSASHLDRLLVLSFKSAASDEDLDNENRQEALHFMARKVDMAVALASIERNWTQAVSAGPSATHEVLDAISLSIEKHPKSATMKNLSVLTTILFRAFDLRREQTQSSESAFDASDLEEIEDLINDVTIKMIYKLNDTAFRPIFIKLVEWATGLPEKNTQGGLARLTTFYRFLQVFFGTLQSIVTGYASYIIESVVSVLETASPSNPNTKSLWLATMRMLRSAFEHDQDEFWQSPSHITKISTPLISHLRHATSTTTGALVATETIPTITELAVAADSTDNHKELNTVLMRFLRPSSASLSSSSTKRAGPGLGGDNPQTRIAALKTEQALTEHLGEDWLALLPEMLPYISELMEDEDEGVEREVRKWVKQIEGVLGERLDDMLT.

2 helical membrane-spanning segments follow: residues 102 to 122 (LALV…EWLI) and 136 to 156 (ILTF…AILP). Residues 581-619 (DVDVQALLPFMLIALADPSERVRSGAVDALANIGKVVDK) form an HEAT 1 repeat. A run of 2 helical transmembrane segments spans residues 939-959 (IQSG…AIVN) and 995-1015 (ALLL…HSVM). HEAT repeat units follow at residues 1038-1076 (DQTI…AFEH), 1110-1148 (YSMD…DSLK), 1244-1282 (TLTT…QSPE), 1288-1327 (QTRM…KYGK), and 1756-1794 (LALL…VLGE).

It belongs to the HEATR1/UTP10 family. Component of the ribosomal small subunit (SSU) processome.

It is found in the nucleus. The protein localises to the nucleolus. It localises to the membrane. Functionally, involved in nucleolar processing of pre-18S ribosomal RNA. Involved in ribosome biosynthesis. This Emericella nidulans (strain FGSC A4 / ATCC 38163 / CBS 112.46 / NRRL 194 / M139) (Aspergillus nidulans) protein is U3 small nucleolar RNA-associated protein 10.